The primary structure comprises 501 residues: MSRYVGAIDQGTTSSRFIVFDREGSVIALAQAEHAQIYPAPGHVEHDATEIWTKTQSVMREALEKGGLQPSDLAAVGITNQRETTLIWDRKTGKPLHNALVWQDTRNDRLVAEFARDGGRDRFRDLTGLPLASYFSGLKLRWLLDHVAGARAKAEAGDVLFGNIDTWLVWNLTGGTEGGLHVTDVTNASRTQLMSLKTLEWDEGMLRTFGIPKAMLPKIVSSSEVYGETRAPFAGVPIAGILGDQQAALFGQTCFAPGEAKNTYGTGCFALMNTGEEPVPSKAGLVTTLAYRLDGQKPAYALEGSIAITGALVQWLRDNLHMIKDSAEVETLATTVEDNGGVYFVPAFSGLYAPHWNEGARGLIIGLTRYVNRGHIARSVLEATAFQTHEVLDAMAKDSGIPVKELRADGGMVANNTLMQFQADMLDVPVVRPKVAETTALGAAYAAGLAVGYWKGLDDLKRNWGVDKRWTPKMDAGRRETIAAAWSRAVQRSFDWKTDED.

Thr12 provides a ligand contact to ADP. Residues Thr12, Thr13, and Ser14 each contribute to the ATP site. Thr12 is a binding site for sn-glycerol 3-phosphate. Arg16 contributes to the ADP binding site. Sn-glycerol 3-phosphate contacts are provided by Arg82, Glu83, Tyr134, and Asp244. The glycerol site is built by Arg82, Glu83, Tyr134, Asp244, and Gln245. ADP contacts are provided by Thr266 and Gly310. ATP-binding residues include Thr266, Gly310, Gln314, and Gly411. Positions 411 and 415 each coordinate ADP.

This sequence belongs to the FGGY kinase family.

It carries out the reaction glycerol + ATP = sn-glycerol 3-phosphate + ADP + H(+). It functions in the pathway polyol metabolism; glycerol degradation via glycerol kinase pathway; sn-glycerol 3-phosphate from glycerol: step 1/1. Inhibited by fructose 1,6-bisphosphate (FBP). In terms of biological role, key enzyme in the regulation of glycerol uptake and metabolism. Catalyzes the phosphorylation of glycerol to yield sn-glycerol 3-phosphate. The sequence is that of Glycerol kinase from Methylobacterium radiotolerans (strain ATCC 27329 / DSM 1819 / JCM 2831 / NBRC 15690 / NCIMB 10815 / 0-1).